The sequence spans 362 residues: 3-dehydroquinate synthase (362 aa).

Residues 72–77 (SGEEAK), 106–110 (GVTGD), 130–131 (TT), K142, and K151 each bind NAD(+). The Zn(2+) site is built by E184, H246, and H263.

The protein belongs to the sugar phosphate cyclases superfamily. Dehydroquinate synthase family. It depends on Co(2+) as a cofactor. Zn(2+) is required as a cofactor. The cofactor is NAD(+).

The protein resides in the cytoplasm. It carries out the reaction 7-phospho-2-dehydro-3-deoxy-D-arabino-heptonate = 3-dehydroquinate + phosphate. It participates in metabolic intermediate biosynthesis; chorismate biosynthesis; chorismate from D-erythrose 4-phosphate and phosphoenolpyruvate: step 2/7. In terms of biological role, catalyzes the conversion of 3-deoxy-D-arabino-heptulosonate 7-phosphate (DAHP) to dehydroquinate (DHQ). This chain is 3-dehydroquinate synthase, found in Bacillus velezensis (strain DSM 23117 / BGSC 10A6 / LMG 26770 / FZB42) (Bacillus amyloliquefaciens subsp. plantarum).